A 593-amino-acid chain; its full sequence is Arginine--tRNA ligase (593 aa).

Positions 138–148 (ANPTGPLHVGH) match the 'HIGH' region motif.

Belongs to the class-I aminoacyl-tRNA synthetase family. In terms of assembly, monomer.

It localises to the cytoplasm. It carries out the reaction tRNA(Arg) + L-arginine + ATP = L-arginyl-tRNA(Arg) + AMP + diphosphate. This Burkholderia vietnamiensis (strain G4 / LMG 22486) (Burkholderia cepacia (strain R1808)) protein is Arginine--tRNA ligase.